A 289-amino-acid chain; its full sequence is MLAMSHQTASSRLPEWARRTIGTASQVSTVEKIVKQRSLHTICEEGRCPNRAECYAQKTATFLLMGPVCTRACGFCQVAGGKALPLDPQEPEKVAEAVALLGLKYVVLTSVARDDLPDQGAGWFVRTMESIRARNCAVEIEVLTPDFRGEEACIATVVAARPVCFNHNIETVRRLQSYARRAATYARSLAVLAAVKRLDAEIFTKSGLMLGHGETREEVLETLLDLRKVGCDRVTLGQYLQPSKDHLPVHKYWTPAEFAELGAVARDLGFAHVRSGPLVRSSYHAGEPE.

[4Fe-4S] cluster contacts are provided by C43, C48, C54, C69, C73, C76, and S282. Positions 55–271 (YAQKTATFLL…GAVARDLGFA (217 aa)) constitute a Radical SAM core domain.

This sequence belongs to the radical SAM superfamily. Lipoyl synthase family. Requires [4Fe-4S] cluster as cofactor.

It is found in the cytoplasm. The enzyme catalyses [[Fe-S] cluster scaffold protein carrying a second [4Fe-4S](2+) cluster] + N(6)-octanoyl-L-lysyl-[protein] + 2 oxidized [2Fe-2S]-[ferredoxin] + 2 S-adenosyl-L-methionine + 4 H(+) = [[Fe-S] cluster scaffold protein] + N(6)-[(R)-dihydrolipoyl]-L-lysyl-[protein] + 4 Fe(3+) + 2 hydrogen sulfide + 2 5'-deoxyadenosine + 2 L-methionine + 2 reduced [2Fe-2S]-[ferredoxin]. It participates in protein modification; protein lipoylation via endogenous pathway; protein N(6)-(lipoyl)lysine from octanoyl-[acyl-carrier-protein]: step 2/2. In terms of biological role, catalyzes the radical-mediated insertion of two sulfur atoms into the C-6 and C-8 positions of the octanoyl moiety bound to the lipoyl domains of lipoate-dependent enzymes, thereby converting the octanoylated domains into lipoylated derivatives. This chain is Lipoyl synthase 2, found in Gloeobacter violaceus (strain ATCC 29082 / PCC 7421).